Consider the following 249-residue polypeptide: 3-deoxy-D-manno-octulosonic acid kinase (249 aa).

Asp175 is an active-site residue.

The protein belongs to the protein kinase superfamily. KdkA/RfaP family.

The protein resides in the cell inner membrane. The catalysed reaction is an alpha-Kdo-(2-&gt;6)-lipid IVA + ATP = a 4-O-phospho-alpha-Kdo-(2-&gt;6)-lipid IVA + ADP + H(+). It participates in bacterial outer membrane biogenesis; LPS core biosynthesis. In terms of biological role, catalyzes the ATP-dependent phosphorylation of the 3-deoxy-D-manno-octulosonic acid (Kdo) residue in Kdo-lipid IV(A) at the 4-OH position. In Xanthomonas campestris pv. campestris (strain 8004), this protein is 3-deoxy-D-manno-octulosonic acid kinase.